Consider the following 487-residue polypeptide: Glucose starvation modulator protein 1 (487 aa).

The tract at residues 1 to 75 is disordered; it reads MSIRFPEIPG…KRLTPQEKKA (75 aa). The span at 59 to 68 shows a compositional bias: polar residues; the sequence is SFSSSMTKRL. The segment at residues 83–111 is a DNA-binding region (zn(2)-C6 fungal-type); the sequence is CVFCHSKHLQCSHSRPCQNCIKRNLAHEC. Residues 122-139 are compositionally biased toward polar residues; that stretch reads MSTTEVPAVSGESSSESG. Residues 122–158 are disordered; it reads MSTTEVPAVSGESSSESGRATGENGSEMGNPPDPQIA. The PAS domain occupies 348–420; the sequence is CLLDYENLSR…FRLFESVAVG (73 aa).

This sequence belongs to the ERT1/acuK family.

The protein localises to the nucleus. In terms of biological role, transcription factor which regulates nonfermentable carbon utilization. In Clavispora lusitaniae (strain ATCC 42720) (Yeast), this protein is Glucose starvation modulator protein 1 (GSM1).